A 184-amino-acid polypeptide reads, in one-letter code: ATP synthase subunit b (184 aa).

The chain crosses the membrane as a helical span at residues 25 to 45 (IFPSWPIMLATLVSFTILLVV).

This sequence belongs to the ATPase B chain family. In terms of assembly, F-type ATPases have 2 components, F(1) - the catalytic core - and F(0) - the membrane proton channel. F(1) has five subunits: alpha(3), beta(3), gamma(1), delta(1), epsilon(1). F(0) has three main subunits: a(1), b(2) and c(10-14). The alpha and beta chains form an alternating ring which encloses part of the gamma chain. F(1) is attached to F(0) by a central stalk formed by the gamma and epsilon chains, while a peripheral stalk is formed by the delta and b chains.

It is found in the cell membrane. In terms of biological role, f(1)F(0) ATP synthase produces ATP from ADP in the presence of a proton or sodium gradient. F-type ATPases consist of two structural domains, F(1) containing the extramembraneous catalytic core and F(0) containing the membrane proton channel, linked together by a central stalk and a peripheral stalk. During catalysis, ATP synthesis in the catalytic domain of F(1) is coupled via a rotary mechanism of the central stalk subunits to proton translocation. Functionally, component of the F(0) channel, it forms part of the peripheral stalk, linking F(1) to F(0). This is ATP synthase subunit b from Mycoplasma mobile (strain ATCC 43663 / 163K / NCTC 11711) (Mesomycoplasma mobile).